Here is a 1101-residue protein sequence, read N- to C-terminus: ATP-citrate synthase (1101 aa).

In terms of domain architecture, ATP-grasp spans 4–265; it reads KAISEQTGKE…LDAKSGASLK (262 aa). ATP is bound by residues Lys-58, Arg-66, Gly-67, Pro-109, Val-111, and Glu-118. Position 131 is a phosphotyrosine (Tyr-131). An ATP-binding site is contributed by Asp-216. Positions 257, 260, and 262 each coordinate Mg(2+). Residue Ser-263 is modified to Phosphoserine. The citrate site is built by Gly-309, Asn-346, Thr-348, Tyr-364, and Arg-379. The segment covering 441 to 457 has biased composition (low complexity); the sequence is ASGSTSTPAPSRTASFS. Residues 441–487 are disordered; that stretch reads ASGSTSTPAPSRTASFSESRADEVAPAKKAKPAMPQDSVPSPRSLQG. The residue at position 447 (Thr-447) is a Phosphothreonine. Position 451 is a phosphoserine (Ser-451). Ser-455 is modified (phosphoserine; by PKA and PKB/AKT1 or PKB/AKT2 or BCKDK). Phosphoserine is present on residues Ser-459 and Ser-481. Residues 478–487 are compositionally biased toward polar residues; sequence SVPSPRSLQG. Residues Lys-540, Lys-546, and Lys-554 each carry the N6-acetyllysine; alternate modification. Glycyl lysine isopeptide (Lys-Gly) (interchain with G-Cter in ubiquitin); alternate cross-links involve residues Lys-540, Lys-546, and Lys-554. Position 639 is a phosphothreonine (Thr-639). The residue at position 663 (Ser-663) is a Phosphoserine. Tyr-682 carries the post-translational modification Phosphotyrosine. Residue His-760 is the Tele-phosphohistidine intermediate of the active site. Residue 779–789 coordinates CoA; the sequence is LKEAGVFVPRS. Ser-839 is subject to Phosphoserine. Lys-948, Lys-968, Lys-978, and Lys-1077 each carry N6-acetyllysine. Ser-1100 is modified (phosphoserine).

In the N-terminal section; belongs to the succinate/malate CoA ligase beta subunit family. It in the C-terminal section; belongs to the succinate/malate CoA ligase alpha subunit family. In terms of assembly, homotetramer. The cofactor is Mg(2+). Phosphorylated by PKA and GSK3 in a sequential manner; phosphorylation results in activation of its activity. Phosphorylation on Thr-447 and Ser-451 depends on the phosphorylation state of Ser-455. Phosphorylation on Ser-455 is decreased by prior phosphorylation on the other 2 residues. Phosphorylated at Ser-455 by BCKDK and dephosphorylated by protein phosphatase PPM1K. In terms of processing, ISGylated. Post-translationally, acetylated at Lys-540, Lys-546 and Lys-554 by KAT2B/PCAF. Acetylation is promoted by glucose and stabilizes the protein, probably by preventing ubiquitination at the same sites. Acetylation promotes de novo lipid synthesis. Deacetylated by SIRT2. Ubiquitinated at Lys-540, Lys-546 and Lys-554 by the BCR(KLHL25) E3 ubiquitin ligase complex and UBR4, leading to its degradation. Ubiquitination is probably inhibited by acetylation at same site. BCR(KLHL25)-mediated degradation of ACLY promotes fatty acid oxidation and is required for differentiation of inducible regulatory T (iTreg) cells.

It is found in the cytoplasm. Its subcellular location is the cytosol. The catalysed reaction is oxaloacetate + acetyl-CoA + ADP + phosphate = citrate + ATP + CoA. Phosphorylation results in activation of its activity. Glucose 6-phosphate, fructose 6-phosphate, fructose 2,6-bisphosphate, ribulose 5-phosphate, and fructose 1,6-bisphosphate also act as activators. In terms of biological role, catalyzes the cleavage of citrate into oxaloacetate and acetyl-CoA, the latter serving as common substrate in multiple biochemical reactions in protein, carbohydrate and lipid metabolism. This chain is ATP-citrate synthase (ACLY), found in Homo sapiens (Human).